We begin with the raw amino-acid sequence, 510 residues long: UDP-N-acetylmuramoylalanine--D-glutamate ligase (510 aa).

138–144 (GTNGKTT) is an ATP binding site. The segment at 294 to 316 (FDEPAPAPRRKKDAPPPTRAGGR) is disordered.

Belongs to the MurCDEF family.

The protein resides in the cytoplasm. It carries out the reaction UDP-N-acetyl-alpha-D-muramoyl-L-alanine + D-glutamate + ATP = UDP-N-acetyl-alpha-D-muramoyl-L-alanyl-D-glutamate + ADP + phosphate + H(+). Its pathway is cell wall biogenesis; peptidoglycan biosynthesis. In terms of biological role, cell wall formation. Catalyzes the addition of glutamate to the nucleotide precursor UDP-N-acetylmuramoyl-L-alanine (UMA). In Bordetella pertussis (strain Tohama I / ATCC BAA-589 / NCTC 13251), this protein is UDP-N-acetylmuramoylalanine--D-glutamate ligase.